We begin with the raw amino-acid sequence, 839 residues long: A disintegrin and metalloproteinase with thrombospondin motifs 4 (839 aa).

The N-terminal stretch at 1 to 51 (MSHMDSHPGRGLADGWLWGIQPRLLLPTVPVSGSRLVWLLLLASLLPSAWP) is a signal peptide. Residues 52 to 212 (ASPLPREEEI…PSPSPRRAKR (161 aa)) constitute a propeptide that is removed on maturation. An N-linked (GlcNAc...) asparagine glycan is attached at Asn-68. A disordered region spans residues 166–209 (EGGAPNSAGGPGAHILRRKSPVSGQGPMCNVKAPPGKPSPSPRR). The Cysteine switch motif lies at 192–199 (PMCNVKAP). Cys-194 is a Zn(2+) binding site. In terms of domain architecture, Peptidase M12B spans 218 to 428 (RFVETLVVAD…GFGHCLLDKP (211 aa)). 11 disulfide bridges follow: Cys-293/Cys-345, Cys-322/Cys-327, Cys-339/Cys-423, Cys-377/Cys-407, Cys-449/Cys-472, Cys-460/Cys-482, Cys-467/Cys-501, Cys-495/Cys-506, Cys-532/Cys-569, Cys-536/Cys-574, and Cys-547/Cys-559. His-361 contributes to the Zn(2+) binding site. Glu-362 is a catalytic residue. Zn(2+)-binding residues include His-365 and His-371. The Disintegrin domain maps to 437-519 (TFPGKDYDAD…DQLQAFNVPQ (83 aa)). The region spanning 520-575 (AGGWGPWGSWGDCSRSCGGGVQFSSRDCTRPVPRNGGKYCEGRRTRFRSCNTQDCP) is the TSP type-1 domain. The interval 686–839 (SKQSGSFKKF…LRRRSWAGRK (154 aa)) is spacer.

As to quaternary structure, interacts with SRPX2. Zn(2+) is required as a cofactor. Post-translationally, the precursor is cleaved by a furin endopeptidase. In terms of processing, glycosylated. Can be O-fucosylated by POFUT2 on a serine or a threonine residue found within the consensus sequence C1-X(2)-(S/T)-C2-G of the TSP type-1 repeat domains where C1 and C2 are the first and second cysteine residue of the repeat, respectively. Fucosylated repeats can then be further glycosylated by the addition of a beta-1,3-glucose residue by the glucosyltransferase, B3GALTL. Fucosylation mediates the efficient secretion of ADAMTS family members. Can also be C-glycosylated with one or two mannose molecules on tryptophan residues within the consensus sequence W-X-X-W of the TPRs, and N-glycosylated. These other glycosylations can also facilitate secretion.

The protein localises to the secreted. It is found in the extracellular space. The protein resides in the extracellular matrix. It carries out the reaction Glutamyl endopeptidase. Bonds cleaved include 370-Thr-Glu-Gly-Glu-|-Ala-Arg-Gly-Ser-377 in the interglobular domain of mammalian aggrecan.. In terms of biological role, cleaves aggrecan, a cartilage proteoglycan, at the '392-Glu-|-Ala-393' site and may be involved in its turnover. Also cleaves COMP. May play an important role in the destruction of aggrecan in arthritic diseases. The sequence is that of A disintegrin and metalloproteinase with thrombospondin motifs 4 (ADAMTS4) from Bos taurus (Bovine).